The following is a 280-amino-acid chain: Putative high affinity immunoglobulin gamma Fc receptor IB (280 aa).

The first 15 residues, 1 to 15 (MWFLTTLLLWVPVDG), serve as a signal peptide directing secretion. Over 16-198 (QVDTTKAVIT…LQLPTPVWFH (183 aa)) the chain is Extracellular. Ig-like C2-type domains are found at residues 22-101 (AVIT…LEIH) and 95-184 (PIQL…ISQY). 2 disulfide bridges follow: cysteine 43/cysteine 85 and cysteine 124/cysteine 168. Residues asparagine 59, asparagine 152, and asparagine 163 are each glycosylated (N-linked (GlcNAc...) asparagine). The helical transmembrane segment at 199 to 219 (VLFYLAVGIMFLVNTVLWVTI) threads the bilayer. The Cytoplasmic segment spans residues 220 to 280 (RKELKRKKKW…VHRKEPQGAT (61 aa)). The interval 258 to 280 (KCQEQKEEQLQEGVHRKEPQGAT) is disordered.

It belongs to the immunoglobulin superfamily. FCGR1 family.

The protein resides in the cell membrane. May bind to the Fc region of immunoglobulins gamma with a low affinity compared to FCGR1A. May function in the humoral immune response. This chain is Putative high affinity immunoglobulin gamma Fc receptor IB, found in Homo sapiens (Human).